The chain runs to 78 residues: Calcium/calmodulin-dependent protein kinase II inhibitor 1 (78 aa).

Residues 41–68 form a CAMK2 inhibitory domain region; it reads NKRPPKLGQIGRSKRVVIEDDRIDDVLK.

This sequence belongs to the CAMK2N family. In terms of assembly, interacts with CAMK2B; the presence of Ca(2+)/calmodulin increases the interaction but is not essential. Interacts with CAMK2A; this interaction requires CAMK2A activation by Ca(2+).

Its subcellular location is the synapse. The protein resides in the cell projection. It localises to the dendrite. The protein localises to the postsynaptic density. Its function is as follows. Potent and specific inhibitor of CaM-kinase II (CAMK2). Plays a role in the maintenance of long-term retrieval-induced memory in response to contextual fear. Modulates blood pressure and vascular reactivity via regulation of CAMK2 activity in addition to regulation of left ventricular mass. Mediates the NLRP3 inflammasome in cardiomyocytes via acting as an inhibitor of the MAPK14/p38 and MAPK8/JNK pathways, thereby regulating ventricular remodeling and cardiac rhythm post-myocardial infarction. Negatively effects insulin sensitivity and promotes lipid formation in adipose tissues independent of CAMK2 signaling. In Homo sapiens (Human), this protein is Calcium/calmodulin-dependent protein kinase II inhibitor 1 (CAMK2N1).